Here is a 113-residue protein sequence, read N- to C-terminus: C-X-C motif chemokine 6 (113 aa).

The signal sequence occupies residues 1–36; it reads MSLLPSRAARVPGPSSSLCALLALLLLTPPGPLVSA. 2 disulfide bridges follow: C48-C74 and C50-C90.

It belongs to the intercrine alpha (chemokine CxC) family.

Its subcellular location is the secreted. In terms of biological role, chemotactic for neutrophil granulocytes. Signals through binding and activation of its receptors (CXCR1 and CXCR2). In addition to its chemotactic and angiogenic properties, it has strong antibacterial activity against Gram-positive and Gram-negative bacteria (90-fold-higher when compared to CXCL5 and CXCL7). The protein is C-X-C motif chemokine 6 (CXCL6) of Equus caballus (Horse).